A 234-amino-acid polypeptide reads, in one-letter code: Orotidine 5'-phosphate decarboxylase (234 aa).

Residues Asp14, Lys36, 63-72 (DLKFHDIPNT), Thr123, Arg184, Gln193, Gly213, and Arg214 contribute to the substrate site. Lys65 functions as the Proton donor in the catalytic mechanism.

The protein belongs to the OMP decarboxylase family. Type 1 subfamily. Homodimer.

It carries out the reaction orotidine 5'-phosphate + H(+) = UMP + CO2. It participates in pyrimidine metabolism; UMP biosynthesis via de novo pathway; UMP from orotate: step 2/2. Its function is as follows. Catalyzes the decarboxylation of orotidine 5'-monophosphate (OMP) to uridine 5'-monophosphate (UMP). The chain is Orotidine 5'-phosphate decarboxylase from Pseudoalteromonas translucida (strain TAC 125).